A 444-amino-acid chain; its full sequence is Divalent metal cation transporter MntH (444 aa).

The next 11 membrane-spanning stretches (helical) occupy residues 39 to 59, 69 to 89, 109 to 128, 146 to 166, 175 to 195, 215 to 235, 264 to 284, 304 to 324, 346 to 366, 372 to 392, and 417 to 437; these read LLFA…GNFA, GYTL…FQAL, FSRP…AMAT, LPLI…LLFE, LVIG…MFIA, TALT…AVYL, VILA…MAAS, TPLL…TSGI, IPVW…ILAG, ALVI…IALI, and AAAI…GFTI.

It belongs to the NRAMP family.

The protein resides in the cell inner membrane. Its function is as follows. H(+)-stimulated, divalent metal cation uptake system. The sequence is that of Divalent metal cation transporter MntH from Granulibacter bethesdensis (strain ATCC BAA-1260 / CGDNIH1).